The sequence spans 469 residues: ATP-dependent protease ATPase subunit HslU (469 aa).

Residues I21, 63–68 (GVGKTE), D282, E347, and R419 each bind ATP.

This sequence belongs to the ClpX chaperone family. HslU subfamily. As to quaternary structure, a double ring-shaped homohexamer of HslV is capped on each side by a ring-shaped HslU homohexamer. The assembly of the HslU/HslV complex is dependent on binding of ATP.

The protein resides in the cytoplasm. Functionally, ATPase subunit of a proteasome-like degradation complex; this subunit has chaperone activity. The binding of ATP and its subsequent hydrolysis by HslU are essential for unfolding of protein substrates subsequently hydrolyzed by HslV. HslU recognizes the N-terminal part of its protein substrates and unfolds these before they are guided to HslV for hydrolysis. The chain is ATP-dependent protease ATPase subunit HslU from Petrotoga mobilis (strain DSM 10674 / SJ95).